Reading from the N-terminus, the 384-residue chain is tRNA 2-selenouridine synthase (384 aa).

A Rhodanese domain is found at 15–138 (FVAGKPLIDL…MRQYLIGVIE (124 aa)). C98 serves as the catalytic S-selanylcysteine intermediate.

Belongs to the SelU family. In terms of assembly, monomer.

The enzyme catalyses 5-methylaminomethyl-2-thiouridine(34) in tRNA + selenophosphate + (2E)-geranyl diphosphate + H2O + H(+) = 5-methylaminomethyl-2-selenouridine(34) in tRNA + (2E)-thiogeraniol + phosphate + diphosphate. It carries out the reaction 5-methylaminomethyl-2-thiouridine(34) in tRNA + (2E)-geranyl diphosphate = 5-methylaminomethyl-S-(2E)-geranyl-thiouridine(34) in tRNA + diphosphate. The catalysed reaction is 5-methylaminomethyl-S-(2E)-geranyl-thiouridine(34) in tRNA + selenophosphate + H(+) = 5-methylaminomethyl-2-(Se-phospho)selenouridine(34) in tRNA + (2E)-thiogeraniol. It catalyses the reaction 5-methylaminomethyl-2-(Se-phospho)selenouridine(34) in tRNA + H2O = 5-methylaminomethyl-2-selenouridine(34) in tRNA + phosphate. Its function is as follows. Involved in the post-transcriptional modification of the uridine at the wobble position (U34) of tRNA(Lys), tRNA(Glu) and tRNA(Gln). Catalyzes the conversion of 2-thiouridine (S2U-RNA) to 2-selenouridine (Se2U-RNA). Acts in a two-step process involving geranylation of 2-thiouridine (S2U) to S-geranyl-2-thiouridine (geS2U) and subsequent selenation of the latter derivative to 2-selenouridine (Se2U) in the tRNA chain. This Shewanella sp. (strain MR-4) protein is tRNA 2-selenouridine synthase.